The primary structure comprises 719 residues: Protein lin-15A (719 aa).

Disordered regions lie at residues 179 to 199, 419 to 464, 559 to 626, and 684 to 719; these read FSHF…EGSQ, YRDH…SISW, LTTA…PTKT, and AKQV…EPIF. Positions 570–579 are enriched in low complexity; the sequence is STSTDSSSSS. A compositionally biased stretch (polar residues) spans 604–617; the sequence is LLQNKPTHVESSSP. Residues 693–719 show a composition bias toward basic and acidic residues; it reads EPKHIPPTHMEKKPEELLMDPKPEPIF.

The protein localises to the nucleus. In terms of biological role, synthetic multivulva (synMuv) class A protein. SynMuv proteins are required to repress the induction of vulval development. Acts redundantly with SynMuv class B protein lin-15B, and lin-35 to negatively regulate vulval development, most likely through antagonization of the Ras-signaling pathway. May also negatively regulate vulval development in association with other SynMuv class B proteins such as dpl-1 and efl-1. Regulates let-23 basal activity. Required for the correct expression and/or stability of lin-56. The chain is Protein lin-15A from Caenorhabditis elegans.